We begin with the raw amino-acid sequence, 631 residues long: ATP-dependent zinc metalloprotease FtsH (631 aa).

Residues 1–2 (MK) lie on the Stromal side of the membrane. Residues 3–23 (ISWKNILLTLIPLGLISFLVW) traverse the membrane as a helical segment. The Lumenal segment spans residues 24–118 (QGFNNTTNPQ…AHATNDSTPA (95 aa)). The chain crosses the membrane as a helical span at residues 119-139 (WSLIGNLIFPILLIAGLAFLF). Topologically, residues 140 to 631 (RRSSNLPGGP…IDYKSQLKST (492 aa)) are stromal. 213-220 (GPPGTGKT) is an ATP binding site. Residue His434 coordinates Zn(2+). Residue Glu435 is part of the active site. His438 and Asp512 together coordinate Zn(2+).

This sequence in the central section; belongs to the AAA ATPase family. It in the C-terminal section; belongs to the peptidase M41 family. As to quaternary structure, homohexamer. The cofactor is Zn(2+).

Its subcellular location is the plastid. It localises to the chloroplast thylakoid membrane. Acts as a processive, ATP-dependent zinc metallopeptidase. This chain is ATP-dependent zinc metalloprotease FtsH, found in Guillardia theta (Cryptophyte).